The following is a 304-amino-acid chain: Mitochondrial RNA-splicing protein MRS4 (304 aa).

Solcar repeat units follow at residues 21–108, 118–200, and 207–300; these read APLH…CKAR, HQPM…ASKF, and YNPL…AKHF. A run of 6 helical transmembrane segments spans residues 23-41, 83-102, 120-139, 175-194, 209-228, and 275-288; these read LHSQLLAGAFAGIMEHSLM, GVQSVILGAGPAHAVYFGTY, PMKTALSGTIATIAADALMN, SYPTTLAMNIPFAAFNFMIY, PLIHCLCGGISGATCAALTT, and GLKPRIVANIPATA.

Belongs to the mitochondrial carrier (TC 2.A.29) family.

It is found in the mitochondrion inner membrane. Its function is as follows. MRS4 suppresses a mitochondrial splice defect in the first intron of the COB gene. It may act as a carrier, exerting its suppressor activity via modulation of solute concentrations in the mitochondrion (possibly of cations). Not essential. In Saccharomyces cerevisiae (strain ATCC 204508 / S288c) (Baker's yeast), this protein is Mitochondrial RNA-splicing protein MRS4 (MRS4).